The primary structure comprises 507 residues: Sensor protein CseC (507 aa).

Residues 1–42 (MRGFFRQRRSVSPPGHPYDRTGPGEHAGPGARTGPGGRPRVL) are disordered. The segment covering 25 to 37 (EHAGPGARTGPGG) has biased composition (gly residues). The next 2 helical transmembrane spans lie at 60–80 (LSAA…LVVH) and 183–203 (ALVI…VLIG). The HAMP domain occupies 204 to 260 (GQLSRRLREAAAAANRVASGEPDVRVRDAIGGVVRDETDDVARAVDAMADALQQRIE). One can recognise a Histidine kinase domain in the interval 268-470 (DIAHELRTPV…VAVLWLPEHA (203 aa)). Phosphohistidine; by autocatalysis is present on H271. The disordered stretch occupies residues 472-507 (TNTGSYPMLPDRSKSGASSSARDMSREASQGMSRKP). A compositionally biased stretch (polar residues) spans 486 to 507 (SGASSSARDMSREASQGMSRKP).

It is found in the cell membrane. It catalyses the reaction ATP + protein L-histidine = ADP + protein N-phospho-L-histidine.. In terms of biological role, member of the two-component regulatory system CseB/CseC involved in the stability of the cell envelope, through activation of transcription of RNA polymerase sigma-E factor. CseC functions as a membrane-associated protein kinase that phosphorylates CseB in response to changes in the cell envelope. In Streptomyces coelicolor (strain ATCC BAA-471 / A3(2) / M145), this protein is Sensor protein CseC (cseC).